Here is a 317-residue protein sequence, read N- to C-terminus: ADP-L-glycero-D-manno-heptose-6-epimerase (317 aa).

Residues F10–I11, D31–D32, Q38, K53, Q75–S79, and N92 contribute to the NADP(+) site. The Proton acceptor role is filled by Y139. Position 143 (K143) interacts with NADP(+). N166 is a substrate binding site. NADP(+)-binding residues include V167 and K175. Catalysis depends on K175, which acts as the Proton acceptor. Residues G177, H184, F198–V201, R211, and Y275 each bind substrate.

This sequence belongs to the NAD(P)-dependent epimerase/dehydratase family. HldD subfamily. As to quaternary structure, homopentamer. It depends on NADP(+) as a cofactor.

The catalysed reaction is ADP-D-glycero-beta-D-manno-heptose = ADP-L-glycero-beta-D-manno-heptose. It participates in nucleotide-sugar biosynthesis; ADP-L-glycero-beta-D-manno-heptose biosynthesis; ADP-L-glycero-beta-D-manno-heptose from D-glycero-beta-D-manno-heptose 7-phosphate: step 4/4. Its function is as follows. Catalyzes the interconversion between ADP-D-glycero-beta-D-manno-heptose and ADP-L-glycero-beta-D-manno-heptose via an epimerization at carbon 6 of the heptose. The polypeptide is ADP-L-glycero-D-manno-heptose-6-epimerase (Shewanella frigidimarina (strain NCIMB 400)).